A 175-amino-acid polypeptide reads, in one-letter code: Lipoprotein signal peptidase (175 aa).

Helical transmembrane passes span 25–45 (LWMAFALLVVVLDQFFKIVIV), 56–76 (VTGFFNLVLVYNKGAAFSFLA), 81–101 (WQRWFFTGLGIVVGAFIVWLL), and 110–130 (FCFAVSLILGGAVGNVIDRVV). Residues Asp-136 and Asp-154 contribute to the active site. Residues 146 to 166 (HWPAFNVADCAITVGAVLLIV) form a helical membrane-spanning segment.

It belongs to the peptidase A8 family.

The protein resides in the cell inner membrane. It catalyses the reaction Release of signal peptides from bacterial membrane prolipoproteins. Hydrolyzes -Xaa-Yaa-Zaa-|-(S,diacylglyceryl)Cys-, in which Xaa is hydrophobic (preferably Leu), and Yaa (Ala or Ser) and Zaa (Gly or Ala) have small, neutral side chains.. The protein operates within protein modification; lipoprotein biosynthesis (signal peptide cleavage). Its function is as follows. This protein specifically catalyzes the removal of signal peptides from prolipoproteins. In Cupriavidus necator (strain ATCC 17699 / DSM 428 / KCTC 22496 / NCIMB 10442 / H16 / Stanier 337) (Ralstonia eutropha), this protein is Lipoprotein signal peptidase.